A 206-amino-acid chain; its full sequence is Small ribosomal subunit protein uS4 (206 aa).

Residues 96-156 form the S4 RNA-binding domain; that stretch reads GRLDNVVYRM…EKAKKQSRVK (61 aa).

It belongs to the universal ribosomal protein uS4 family. In terms of assembly, part of the 30S ribosomal subunit. Contacts protein S5. The interaction surface between S4 and S5 is involved in control of translational fidelity.

In terms of biological role, one of the primary rRNA binding proteins, it binds directly to 16S rRNA where it nucleates assembly of the body of the 30S subunit. Functionally, with S5 and S12 plays an important role in translational accuracy. The protein is Small ribosomal subunit protein uS4 of Shigella flexneri.